A 97-amino-acid chain; its full sequence is Large ribosomal subunit protein eL21 (97 aa).

The protein belongs to the eukaryotic ribosomal protein eL21 family.

This chain is Large ribosomal subunit protein eL21, found in Methanoculleus marisnigri (strain ATCC 35101 / DSM 1498 / JR1).